Here is a 313-residue protein sequence, read N- to C-terminus: Competence protein ComGA (313 aa).

138-145 (GPVGSGKT) serves as a coordination point for ATP.

It belongs to the GSP E family.

It localises to the cell membrane. In terms of biological role, required for uptake of DNA by competent cells. May be involved in assembly of a complex forming a transformation pilus at the surface of competent cells. In Streptococcus pneumoniae (strain ATCC BAA-255 / R6), this protein is Competence protein ComGA.